Here is a 162-residue protein sequence, read N- to C-terminus: MRKIIGFRIGRRVSRWIFRKTRIQRSGYNRIHSTQQACMLMRPLAKLKSWGQRLKQSFRRRSTRRSAYIPVDHKKADPVPRGHLAIYVGQKDGDCHRVLVPIVYFNHPLFGELLREAEKEYGFCHEGGITIPCLYSDFERVKTRIASGSSSRVFPWGRHCRN.

This sequence belongs to the ARG7 family. As to expression, expressed in embryo, endosperm, growing hypocotyls and shoot apical meristems.

Functionally, acts a positive regulator of leaf senescence and may mediate auxin-induced leaf senescence. Plays a role in the regulation of seed germination by gibberellins and abscisic acid (ABA). Plays a role in the regulation of light-dependent hypocotyl elongation. This chain is Auxin-responsive protein SAUR36, found in Arabidopsis thaliana (Mouse-ear cress).